Consider the following 359-residue polypeptide: Methylthioribose-1-phosphate isomerase (359 aa).

Residues 52-54 (RGA), R90, and Q200 contribute to the substrate site. D241 serves as the catalytic Proton donor. 251 to 252 (NK) serves as a coordination point for substrate.

This sequence belongs to the eIF-2B alpha/beta/delta subunits family. MtnA subfamily.

It carries out the reaction 5-(methylsulfanyl)-alpha-D-ribose 1-phosphate = 5-(methylsulfanyl)-D-ribulose 1-phosphate. It functions in the pathway amino-acid biosynthesis; L-methionine biosynthesis via salvage pathway; L-methionine from S-methyl-5-thio-alpha-D-ribose 1-phosphate: step 1/6. Functionally, catalyzes the interconversion of methylthioribose-1-phosphate (MTR-1-P) into methylthioribulose-1-phosphate (MTRu-1-P). The sequence is that of Methylthioribose-1-phosphate isomerase from Sulfurimonas denitrificans (strain ATCC 33889 / DSM 1251) (Thiomicrospira denitrificans (strain ATCC 33889 / DSM 1251)).